The primary structure comprises 145 residues: Putative antiporter subunit mnhG2 (145 aa).

Transmembrane regions (helical) follow at residues 11–31, 51–71, and 72–92; these read IAAV…IGIV, VLLT…FFSV, and RLLL…HLVA.

The protein belongs to the CPA3 antiporters (TC 2.A.63) subunit G family. As to quaternary structure, may form a heterooligomeric complex that consists of seven subunits: mnhA2, mnhB2, mnhC2, mnhD2, mnhE2, mnhF2 and mnhG2.

The protein localises to the cell membrane. In Staphylococcus aureus (strain JH9), this protein is Putative antiporter subunit mnhG2 (mnhG2).